The following is a 508-amino-acid chain: Photosystem II CP47 reaction center protein (508 aa).

6 helical membrane passes run 21-36 (AVHL…WAGS), 101-115 (IILS…IWHW), 140-156 (GIHL…FGAF), 203-218 (IAAG…FHLS), 237-252 (VLSS…AFVV), and 457-472 (IFAL…HGAR).

It belongs to the PsbB/PsbC family. PsbB subfamily. In terms of assembly, PSII is composed of 1 copy each of membrane proteins PsbA, PsbB, PsbC, PsbD, PsbE, PsbF, PsbH, PsbI, PsbJ, PsbK, PsbL, PsbM, PsbT, PsbY, PsbZ, Psb30/Ycf12, at least 3 peripheral proteins of the oxygen-evolving complex and a large number of cofactors. It forms dimeric complexes. Requires Binds multiple chlorophylls. PSII binds additional chlorophylls, carotenoids and specific lipids. as cofactor.

The protein resides in the plastid. It localises to the chloroplast thylakoid membrane. In terms of biological role, one of the components of the core complex of photosystem II (PSII). It binds chlorophyll and helps catalyze the primary light-induced photochemical processes of PSII. PSII is a light-driven water:plastoquinone oxidoreductase, using light energy to abstract electrons from H(2)O, generating O(2) and a proton gradient subsequently used for ATP formation. In Bigelowiella natans (Pedinomonas minutissima), this protein is Photosystem II CP47 reaction center protein.